The primary structure comprises 232 residues: U-scoloptoxin(11)-Ssd2a (232 aa).

The first 21 residues, 1–21 (MFQFCLLILLLAPGRFFSALG), serve as a signal peptide directing secretion. Residues 22 to 32 (KPQETLTVENR) constitute a propeptide that is removed on maturation.

Contains 8 disulfide bonds. In terms of tissue distribution, expressed by the venom gland.

The protein localises to the secreted. The sequence is that of U-scoloptoxin(11)-Ssd2a from Scolopendra dehaani (Thai centipede).